A 264-amino-acid polypeptide reads, in one-letter code: 3-methyl-2-oxobutanoate hydroxymethyltransferase (264 aa).

Mg(2+) contacts are provided by Asp45 and Asp84. Residues Asp45–Ser46, Asp84, and Lys112 each bind 3-methyl-2-oxobutanoate. Residue Glu114 coordinates Mg(2+). Glu181 functions as the Proton acceptor in the catalytic mechanism.

It belongs to the PanB family. Homodecamer; pentamer of dimers. Requires Mg(2+) as cofactor.

It is found in the cytoplasm. The catalysed reaction is 3-methyl-2-oxobutanoate + (6R)-5,10-methylene-5,6,7,8-tetrahydrofolate + H2O = 2-dehydropantoate + (6S)-5,6,7,8-tetrahydrofolate. It participates in cofactor biosynthesis; (R)-pantothenate biosynthesis; (R)-pantoate from 3-methyl-2-oxobutanoate: step 1/2. Its function is as follows. Catalyzes the reversible reaction in which hydroxymethyl group from 5,10-methylenetetrahydrofolate is transferred onto alpha-ketoisovalerate to form ketopantoate. The sequence is that of 3-methyl-2-oxobutanoate hydroxymethyltransferase from Shewanella sp. (strain MR-4).